The chain runs to 357 residues: Aspartate carbamoyltransferase catalytic subunit (357 aa).

Residues Met1–Pro15 are compositionally biased toward polar residues. The tract at residues Met1–Phe21 is disordered. Positions 97 and 98 each coordinate carbamoyl phosphate. Lys125 serves as a coordination point for L-aspartate. Positions 147, 177, and 180 each coordinate carbamoyl phosphate. The L-aspartate site is built by Arg211 and Arg266. Residues Gly307 and Pro308 each contribute to the carbamoyl phosphate site.

The protein belongs to the aspartate/ornithine carbamoyltransferase superfamily. ATCase family. In terms of assembly, heterododecamer (2C3:3R2) of six catalytic PyrB chains organized as two trimers (C3), and six regulatory PyrI chains organized as three dimers (R2).

The enzyme catalyses carbamoyl phosphate + L-aspartate = N-carbamoyl-L-aspartate + phosphate + H(+). It participates in pyrimidine metabolism; UMP biosynthesis via de novo pathway; (S)-dihydroorotate from bicarbonate: step 2/3. Catalyzes the condensation of carbamoyl phosphate and aspartate to form carbamoyl aspartate and inorganic phosphate, the committed step in the de novo pyrimidine nucleotide biosynthesis pathway. The chain is Aspartate carbamoyltransferase catalytic subunit from Psychrobacter cryohalolentis (strain ATCC BAA-1226 / DSM 17306 / VKM B-2378 / K5).